We begin with the raw amino-acid sequence, 331 residues long: NADH-quinone oxidoreductase subunit H (331 aa).

8 consecutive transmembrane segments (helical) span residues 7 to 27 (ALVTIILTVVKAIVVLLAVVI), 81 to 101 (MIFTLAPVIAMGALLVAFAIV), 114 to 134 (IGILFFFAMAGLTVYAVLFAG), 154 to 174 (ISYEVFLALSLMGIVAQVGSF), 187 to 207 (VWFIIPQFFGFCTFIIAGVAV), 238 to 258 (FFVGEYIGIVLVSALLATLFF), 271 to 291 (WLSFFYFAAKTGFFIMLFILI), and 310 to 330 (VCLPLTLINLLVTGALVLAAA).

This sequence belongs to the complex I subunit 1 family. In terms of assembly, NDH-1 is composed of 13 different subunits. Subunits NuoA, H, J, K, L, M, N constitute the membrane sector of the complex.

It is found in the cell inner membrane. It catalyses the reaction a quinone + NADH + 5 H(+)(in) = a quinol + NAD(+) + 4 H(+)(out). Functionally, NDH-1 shuttles electrons from NADH, via FMN and iron-sulfur (Fe-S) centers, to quinones in the respiratory chain. The immediate electron acceptor for the enzyme in this species is believed to be ubiquinone. Couples the redox reaction to proton translocation (for every two electrons transferred, four hydrogen ions are translocated across the cytoplasmic membrane), and thus conserves the redox energy in a proton gradient. This subunit may bind ubiquinone. In Pseudomonas paraeruginosa (strain DSM 24068 / PA7) (Pseudomonas aeruginosa (strain PA7)), this protein is NADH-quinone oxidoreductase subunit H.